Consider the following 729-residue polypeptide: Phosphoribosylformylglycinamidine synthase subunit PurL (729 aa).

The active site involves H54. The ATP site is built by Y57 and K96. E98 provides a ligand contact to Mg(2+). Residues S99–H102 and R121 each bind substrate. The Proton acceptor role is filled by H100. Residue D122 coordinates Mg(2+). Q245 provides a ligand contact to substrate. D273 provides a ligand contact to Mg(2+). E317–Q319 is a substrate binding site. ATP-binding residues include D495 and G532. N533 contacts Mg(2+). S535 lines the substrate pocket.

Belongs to the FGAMS family. As to quaternary structure, monomer. Part of the FGAM synthase complex composed of 1 PurL, 1 PurQ and 2 PurS subunits.

Its subcellular location is the cytoplasm. It carries out the reaction N(2)-formyl-N(1)-(5-phospho-beta-D-ribosyl)glycinamide + L-glutamine + ATP + H2O = 2-formamido-N(1)-(5-O-phospho-beta-D-ribosyl)acetamidine + L-glutamate + ADP + phosphate + H(+). It participates in purine metabolism; IMP biosynthesis via de novo pathway; 5-amino-1-(5-phospho-D-ribosyl)imidazole from N(2)-formyl-N(1)-(5-phospho-D-ribosyl)glycinamide: step 1/2. Its function is as follows. Part of the phosphoribosylformylglycinamidine synthase complex involved in the purines biosynthetic pathway. Catalyzes the ATP-dependent conversion of formylglycinamide ribonucleotide (FGAR) and glutamine to yield formylglycinamidine ribonucleotide (FGAM) and glutamate. The FGAM synthase complex is composed of three subunits. PurQ produces an ammonia molecule by converting glutamine to glutamate. PurL transfers the ammonia molecule to FGAR to form FGAM in an ATP-dependent manner. PurS interacts with PurQ and PurL and is thought to assist in the transfer of the ammonia molecule from PurQ to PurL. In Staphylococcus epidermidis (strain ATCC 12228 / FDA PCI 1200), this protein is Phosphoribosylformylglycinamidine synthase subunit PurL.